Consider the following 1255-residue polypeptide: ATP-binding cassette sub-family B member 5 (1255 aa).

A helical membrane pass occupies residues 46-66 (IVLMTLGILASMINGATVPLM). The 301-residue stretch at 51–351 (LGILASMING…SVAPHLETFT (301 aa)) folds into the ABC transmembrane type-1 1 domain. 2 N-linked (GlcNAc...) asparagine glycosylation sites follow: asparagine 86 and asparagine 92. A helical membrane pass occupies residues 104–124 (IIVLTLYYIGIGAAALIFGYV). N-linked (GlcNAc...) asparagine glycosylation is present at asparagine 189. The next 2 helical transmembrane spans lie at 290–310 (LSLG…FWYG) and 314–334 (IFGG…FSVI). 2 N-linked (GlcNAc...) asparagine glycosylation sites follow: asparagine 372 and asparagine 391. In terms of domain architecture, ABC transporter 1 spans 387-623 (IEFKNVSFSY…QGLYYSLAMA (237 aa)). Position 422 to 429 (422 to 429 (GPSGSGKS)) interacts with ATP. The N-linked (GlcNAc...) asparagine glycan is linked to asparagine 643. 2 consecutive transmembrane segments (helical) span residues 694–714 (VLGT…SIIF) and 738–758 (MMLV…GLFY). The ABC transmembrane type-1 2 domain maps to 694 to 981 (VLGTLASALN…TLVWAPEYSK (288 aa)). Asparagine 790 carries N-linked (GlcNAc...) asparagine glycosylation. The next 3 membrane-spanning stretches (helical) occupy residues 814–836 (LGIV…IYGW), 841–863 (LILS…MAGF), and 955–975 (MFIV…TLVW). The ABC transporter 2 domain occupies 1016–1254 (LEFREVSFVY…GDTYFKLVAA (239 aa)). N-linked (GlcNAc...) asparagine glycosylation occurs at asparagine 1036. An ATP-binding site is contributed by 1051–1058 (GSSGCGKS). N-linked (GlcNAc...) asparagine glycans are attached at residues asparagine 1105, asparagine 1189, and asparagine 1229.

This sequence belongs to the ABC transporter superfamily. ABCB family. Multidrug resistance exporter (TC 3.A.1.201) subfamily. In developing eye, expressed in basal limbal epithelium but not in central cornea. Acts as a marker of limbal stem cells.

Its subcellular location is the cell membrane. It catalyses the reaction daunorubicin(in) + ATP + H2O = daunorubicin(out) + ADP + phosphate + H(+). Functionally, energy-dependent efflux transporter responsible for decreased drug accumulation in multidrug-resistant cells. Specifically present in limbal stem cells, where it plays a key role in corneal development and repair. In Mus musculus (Mouse), this protein is ATP-binding cassette sub-family B member 5.